We begin with the raw amino-acid sequence, 92 residues long: Probable Fe(2+)-trafficking protein (92 aa).

It belongs to the Fe(2+)-trafficking protein family.

Its function is as follows. Could be a mediator in iron transactions between iron acquisition and iron-requiring processes, such as synthesis and/or repair of Fe-S clusters in biosynthetic enzymes. In Anaeromyxobacter sp. (strain Fw109-5), this protein is Probable Fe(2+)-trafficking protein.